Reading from the N-terminus, the 230-residue chain is Orotidine 5'-phosphate decarboxylase (230 aa).

Residues Asp-10, Lys-31, 58-67 (DLKLHDIPNT), Thr-117, Arg-179, Gln-188, Gly-208, and Arg-209 each bind substrate. Residue Lys-60 is the Proton donor of the active site.

The protein belongs to the OMP decarboxylase family. Type 1 subfamily. Homodimer.

It carries out the reaction orotidine 5'-phosphate + H(+) = UMP + CO2. The protein operates within pyrimidine metabolism; UMP biosynthesis via de novo pathway; UMP from orotate: step 2/2. Catalyzes the decarboxylation of orotidine 5'-monophosphate (OMP) to uridine 5'-monophosphate (UMP). The sequence is that of Orotidine 5'-phosphate decarboxylase from Staphylococcus aureus (strain USA300).